We begin with the raw amino-acid sequence, 186 residues long: MKVIIGLGNIGKEYEKTRHNAGFIAIDLLLEKYNYSSVKQEFNSLIYTTIINNQKVLLVKPLTFMNNSGLAVRQIINFYKINLNDLIIIHDDKDLNISRIQFKKDGSSAGHNGIKSIINNLQTQNFYRLRIGVNQVPKEWKIVDWVLSKFSDEELNLLKQSFIDKIEFINDFTNNKTFIYLMNKYN.

Position 14 (tyrosine 14) interacts with tRNA. The active-site Proton acceptor is the histidine 19. Residues phenylalanine 64, asparagine 66, and asparagine 112 each contribute to the tRNA site.

Belongs to the PTH family. Monomer.

It is found in the cytoplasm. It carries out the reaction an N-acyl-L-alpha-aminoacyl-tRNA + H2O = an N-acyl-L-amino acid + a tRNA + H(+). Its function is as follows. Hydrolyzes ribosome-free peptidyl-tRNAs (with 1 or more amino acids incorporated), which drop off the ribosome during protein synthesis, or as a result of ribosome stalling. Catalyzes the release of premature peptidyl moieties from peptidyl-tRNA molecules trapped in stalled 50S ribosomal subunits, and thus maintains levels of free tRNAs and 50S ribosomes. The sequence is that of Peptidyl-tRNA hydrolase from Mycoplasma mycoides subsp. mycoides SC (strain CCUG 32753 / NCTC 10114 / PG1).